The primary structure comprises 156 residues: Lipoprotein signal peptidase (156 aa).

Transmembrane regions (helical) follow at residues 5–25 (FKFI…DQWV), 64–84 (YLHL…KTLL), and 89–109 (IAFG…FIYG). Active-site residues include Asp113 and Asp130. Residues 122-142 (NFAIFNVADVMINISVALILI) form a helical membrane-spanning segment.

It belongs to the peptidase A8 family.

It localises to the cell inner membrane. It catalyses the reaction Release of signal peptides from bacterial membrane prolipoproteins. Hydrolyzes -Xaa-Yaa-Zaa-|-(S,diacylglyceryl)Cys-, in which Xaa is hydrophobic (preferably Leu), and Yaa (Ala or Ser) and Zaa (Gly or Ala) have small, neutral side chains.. It participates in protein modification; lipoprotein biosynthesis (signal peptide cleavage). This protein specifically catalyzes the removal of signal peptides from prolipoproteins. The chain is Lipoprotein signal peptidase from Campylobacter jejuni subsp. doylei (strain ATCC BAA-1458 / RM4099 / 269.97).